A 239-amino-acid chain; its full sequence is Caffeoyl-CoA O-methyltransferase 1 (239 aa).

Substrate is bound at residue K13. Residues T55, E77, 79 to 80 (GV), S85, D103, and A132 each bind S-adenosyl-L-methionine. D155 is a binding site for substrate. D155 contributes to the a divalent metal cation binding site. D157 lines the S-adenosyl-L-methionine pocket. 2 residues coordinate a divalent metal cation: D181 and N182. A substrate-binding site is contributed by N186.

It belongs to the class I-like SAM-binding methyltransferase superfamily. Cation-dependent O-methyltransferase family. CCoAMT subfamily. Monomer. Requires Mg(2+) as cofactor. As to expression, mostly expressed in the bottom and middle parts of the stems.

It carries out the reaction (E)-caffeoyl-CoA + S-adenosyl-L-methionine = (E)-feruloyl-CoA + S-adenosyl-L-homocysteine + H(+). It participates in aromatic compound metabolism; phenylpropanoid biosynthesis. In terms of biological role, methylates caffeoyl-CoA to feruloyl-CoA and 5-hydroxyferuloyl-CoA to sinapoyl-CoA. Plays a role in the synthesis of feruloylated polysaccharides. Involved in the reinforcement of the plant cell wall. Also involved in the responding to wounding or pathogen challenge by the increased formation of cell wall-bound ferulic acid polymers. The sequence is that of Caffeoyl-CoA O-methyltransferase 1 (CCOAOMT1) from Nicotiana tabacum (Common tobacco).